Consider the following 179-residue polypeptide: UPF0398 protein SSU05_0416 (179 aa).

The protein belongs to the UPF0398 family.

This is UPF0398 protein SSU05_0416 from Streptococcus suis (strain 05ZYH33).